A 224-amino-acid chain; its full sequence is MKKRAIVLLSGGLDSATVLAMANAQGFETYALSMRYGQRHSSELEAAKKVAAALGAVRHEIVDLDLRRFGGSALTDDALEVPTTGVQEGIPITYVPARNTIMLSLALGWAEAVGARDLFFGANAVDYSGYPDCRPEYVAAYETLANLATKAGVEGDHIRVNAPIIAMTKAEIIQAGARLGVDYSLTVSCYQADDEGRACGVCDSCRIRRAGFEAAAVPDPTRYR.

9 to 19 (LSGGLDSATVL) provides a ligand contact to ATP. Positions 189, 199, 202, and 205 each coordinate Zn(2+).

The protein belongs to the QueC family. Zn(2+) is required as a cofactor.

The catalysed reaction is 7-carboxy-7-deazaguanine + NH4(+) + ATP = 7-cyano-7-deazaguanine + ADP + phosphate + H2O + H(+). It functions in the pathway purine metabolism; 7-cyano-7-deazaguanine biosynthesis. In terms of biological role, catalyzes the ATP-dependent conversion of 7-carboxy-7-deazaguanine (CDG) to 7-cyano-7-deazaguanine (preQ(0)). In Ralstonia nicotianae (strain ATCC BAA-1114 / GMI1000) (Ralstonia solanacearum), this protein is 7-cyano-7-deazaguanine synthase.